Consider the following 529-residue polypeptide: Transcription factor BIM1 (529 aa).

Disordered regions lie at residues 1-91 (MELP…HVLP), 245-291 (KKES…RRSK), 425-450 (RVASSEAVEPSPSSRSQKEEEDEEVL), and 491-529 (AKQSSSSSFKDHEVREPVSRTRNDNVKQTRKPKRLKTGQ). Positions 76-86 (KPPPPAPPPPL) are enriched in pro residues. 2 stretches are compositionally biased toward basic and acidic residues: residues 255–265 (HRVDLRVKADV) and 282–291 (SATEQRRRSK). The bHLH domain maps to 276–326 (TPRSKHSATEQRRRSKINDRFQMLRQLIPNSDQKRDKASFLLEVIEYIQFL). Over residues 426-438 (VASSEAVEPSPSS) the composition is skewed to low complexity. Basic and acidic residues predominate over residues 499–517 (FKDHEVREPVSRTRNDNVK). The span at 518–529 (QTRKPKRLKTGQ) shows a compositional bias: basic residues.

As to quaternary structure, homodimer. Interacts with BZR2/BES1 through both C-terminal and bHLH domains. Also interacts with LHW. In terms of tissue distribution, expressed constitutively in roots.

It localises to the nucleus. Functionally, positive brassinosteroid-signaling protein. Transcription factor that bind specifically to the DNA sequence 5'-CANNTG-3'(E box). Can bind individually to the promoter as a homodimer or synergistically as a heterodimer with BZR2/BES1. Does not itself activate transcription but enhances BZR2/BES1-mediated target gene activation. The protein is Transcription factor BIM1 (BIM1) of Arabidopsis thaliana (Mouse-ear cress).